A 62-amino-acid chain; its full sequence is High-potential iron-sulfur protein (62 aa).

[4Fe-4S] cluster-binding residues include C22, C25, C40, and C55.

The protein belongs to the high-potential iron-sulfur protein (HiPIP) family. In terms of assembly, homodimer.

Functionally, specific class of high-redox-potential 4Fe-4S ferredoxins. Functions in anaerobic electron transport in most purple and in some other photosynthetic bacteria and in at least one genus (Paracoccus) of halophilic, denitrifying bacteria. The polypeptide is High-potential iron-sulfur protein (hip) (Rhodocyclus tenuis (Rhodospirillum tenue)).